The sequence spans 519 residues: Aldehyde dehydrogenase, mitochondrial (519 aa).

The N-terminal 19 residues, 1–19 (MLRAALSTARRGPRLSRLL), are a transit peptide targeting the mitochondrion. Positions 12 to 26 (GPRLSRLLSAAATSA) match the SIFI-degron motif. N6-acetyllysine occurs at positions 54, 75, 80, and 161. Residue 264-269 (GSTEVG) coordinates NAD(+). Glu-287 serves as the catalytic Proton acceptor. Catalysis depends on Cys-321, which acts as the Nucleophile. 8 positions are modified to N6-acetyllysine: Lys-370, Lys-377, Lys-385, Lys-409, Lys-428, Lys-430, Lys-443, and Lys-453.

The protein belongs to the aldehyde dehydrogenase family. In terms of assembly, homotetramer. Post-translationally, in response to mitochondrial stress, the precursor protein is ubiquitinated by the SIFI complex in the cytoplasm before mitochondrial import, leading to its degradation. Within the SIFI complex, UBR4 initiates ubiquitin chain that are further elongated or branched by KCMF1.

Its subcellular location is the mitochondrion matrix. It carries out the reaction an aldehyde + NAD(+) + H2O = a carboxylate + NADH + 2 H(+). It participates in alcohol metabolism; ethanol degradation; acetate from ethanol: step 2/2. In terms of biological role, required for clearance of cellular formaldehyde, a cytotoxic and carcinogenic metabolite that induces DNA damage. The protein is Aldehyde dehydrogenase, mitochondrial (Aldh2) of Rattus norvegicus (Rat).